Here is a 424-residue protein sequence, read N- to C-terminus: Glutamyl-tRNA reductase (424 aa).

Substrate is bound by residues Thr-49–Arg-52, Ser-105, Glu-110–Gln-112, and Gln-116. Cys-50 acts as the Nucleophile in catalysis. Residue Gly-185–Ala-190 participates in NADP(+) binding.

This sequence belongs to the glutamyl-tRNA reductase family. As to quaternary structure, homodimer.

It catalyses the reaction (S)-4-amino-5-oxopentanoate + tRNA(Glu) + NADP(+) = L-glutamyl-tRNA(Glu) + NADPH + H(+). It participates in porphyrin-containing compound metabolism; protoporphyrin-IX biosynthesis; 5-aminolevulinate from L-glutamyl-tRNA(Glu): step 1/2. Its function is as follows. Catalyzes the NADPH-dependent reduction of glutamyl-tRNA(Glu) to glutamate 1-semialdehyde (GSA). The polypeptide is Glutamyl-tRNA reductase (Legionella pneumophila (strain Corby)).